Here is a 224-residue protein sequence, read N- to C-terminus: tRNA (guanine-N(7)-)-methyltransferase (224 aa).

Glu-54, Glu-79, Glu-106, and Asp-129 together coordinate S-adenosyl-L-methionine. Residue Asp-129 is part of the active site. Positions 133 and 165 each coordinate substrate.

This sequence belongs to the class I-like SAM-binding methyltransferase superfamily. TrmB family.

It carries out the reaction guanosine(46) in tRNA + S-adenosyl-L-methionine = N(7)-methylguanosine(46) in tRNA + S-adenosyl-L-homocysteine. Its pathway is tRNA modification; N(7)-methylguanine-tRNA biosynthesis. Its function is as follows. Catalyzes the formation of N(7)-methylguanine at position 46 (m7G46) in tRNA. The sequence is that of tRNA (guanine-N(7)-)-methyltransferase from Chlamydia muridarum (strain MoPn / Nigg).